Here is a 210-residue protein sequence, read N- to C-terminus: MTGLFVTLEGPEGAGKSTNRDYLAERLRERGIEVQLTREPGGTPLAERIRELLLAPSDEPMAADTELLLMFAARAQHLAGVIRPALARGAVVLCDRFTDATYAYQGGGRGLPEARIAALESFVQGDLRPDLTLVFDLPVEIGLARAAARGRLDRFEQEDRRFFEAVRQTYLQRAAQAPERYQVLDAGLPLAEVQAGLDRLLPNLLERLNG.

Residue 10–17 (GPEGAGKS) participates in ATP binding.

The protein belongs to the thymidylate kinase family.

It catalyses the reaction dTMP + ATP = dTDP + ADP. Phosphorylation of dTMP to form dTDP in both de novo and salvage pathways of dTTP synthesis. In Pseudomonas aeruginosa (strain LESB58), this protein is Thymidylate kinase.